We begin with the raw amino-acid sequence, 223 residues long: Serine/threonine/tyrosine-interacting protein (223 aa).

One can recognise a Tyrosine-protein phosphatase domain in the interval 28–176 (EMQEILPGLF…LQEYEAIYLA (149 aa)). The short motif at 76-78 (FQQ) is the Interaction with FBXW7 element. Phosphoserine occurs at positions 184, 193, and 201. Residues 197 to 223 (GTTGSLKRTHEEEDDFGTMQVATAQNG) are disordered.

This sequence belongs to the protein-tyrosine phosphatase family. Non-receptor class subfamily. As to quaternary structure, interacts with MAPK1; independently of MAPK1 phosphorylation status. Interacts with CARHSP1/Crhsp-24. Interacts (via FQQ motif) with FBXW7 isoforms 1 (via F-box domain) and 3 (via F-box domain); the interaction is direct and prevents FBXW7 interaction with SKP1, a component of the SCF(FBXW7) complex. Does not interact with FBXW7 isoform 2.

The protein localises to the nucleus. The protein resides in the cytoplasm. It is found in the cytosol. Its function is as follows. Catalytically inactive phosphatase. Acts as a nuclear anchor for MAPK1/MAPK3 (ERK1/ERK2). Modulates cell-fate decisions and cell migration by spatiotemporal regulation of MAPK1/MAPK3 (ERK1/ERK2). By binding to the F-box of FBXW7, prevents the assembly of FBXW7 into the SCF E3 ubiquitin-protein ligase complex, and thereby inhibits degradation of its substrates. Plays a role in spermatogenesis. The sequence is that of Serine/threonine/tyrosine-interacting protein from Homo sapiens (Human).